Here is a 244-residue protein sequence, read N- to C-terminus: Protein crossbronx (244 aa).

One can recognise a UBC core domain in the interval 20 to 176 (QQEYKILAEY…VQENIKESKE (157 aa)). The disordered stretch occupies residues 209–244 (AGRSKQTEPSAQQGNGGHATGLSWVKEGEFKPLSIE).

Belongs to the ubiquitin-conjugating enzyme family. FTS subfamily.

In Drosophila simulans (Fruit fly), this protein is Protein crossbronx (cbx).